The sequence spans 311 residues: Aspartate carbamoyltransferase catalytic subunit (311 aa).

Arg-55 and Thr-56 together coordinate carbamoyl phosphate. L-aspartate is bound at residue Lys-85. Positions 106, 135, and 138 each coordinate carbamoyl phosphate. L-aspartate is bound by residues Arg-168 and Arg-230. Leu-268 and Pro-269 together coordinate carbamoyl phosphate.

This sequence belongs to the aspartate/ornithine carbamoyltransferase superfamily. ATCase family. Heterododecamer (2C3:3R2) of six catalytic PyrB chains organized as two trimers (C3), and six regulatory PyrI chains organized as three dimers (R2).

It catalyses the reaction carbamoyl phosphate + L-aspartate = N-carbamoyl-L-aspartate + phosphate + H(+). It participates in pyrimidine metabolism; UMP biosynthesis via de novo pathway; (S)-dihydroorotate from bicarbonate: step 2/3. In terms of biological role, catalyzes the condensation of carbamoyl phosphate and aspartate to form carbamoyl aspartate and inorganic phosphate, the committed step in the de novo pyrimidine nucleotide biosynthesis pathway. This chain is Aspartate carbamoyltransferase catalytic subunit, found in Yersinia pseudotuberculosis serotype IB (strain PB1/+).